Reading from the N-terminus, the 128-residue chain is UPF0102 protein GSU0650 (128 aa).

The protein belongs to the UPF0102 family.

The chain is UPF0102 protein GSU0650 from Geobacter sulfurreducens (strain ATCC 51573 / DSM 12127 / PCA).